The primary structure comprises 652 residues: Drebrin (652 aa).

Ala-2 carries the post-translational modification N-acetylalanine. Residues 5 to 134 enclose the ADF-H domain; that stretch reads GFAAHRLELL…DPGAIGQRLS (130 aa). 2 stretches are compositionally biased toward basic and acidic residues: residues 211–236 and 288–298; these read MEQE…EEHR and DNPREFFKQQE. Disordered stretches follow at residues 211–350 and 371–652; these read MEQE…YITC and SAAG…GGGL. Residues 328 to 340 show a composition bias toward low complexity; that stretch reads SGPPSSSSSSSSP. Over residues 507–517 the composition is skewed to pro residues; the sequence is PDTPAGPPVPP. Composition is skewed to acidic residues over residues 540-554 and 640-652; these read QHEE…EEAT and PLPE…GGGL.

In terms of tissue distribution, brain neurons.

It is found in the cytoplasm. The protein localises to the cell projection. It localises to the dendrite. Its subcellular location is the cell cortex. The protein resides in the cell junction. It is found in the growth cone. In terms of biological role, actin cytoskeleton-organizing protein that plays a role in the formation of cell projections. Plays a role in dendritic spine morphogenesis and organization, including the localization of the dopamine receptor DRD1 to the dendritic spines. Involved in synaptic plasticity. This is Drebrin (DBN1) from Gallus gallus (Chicken).